Here is a 212-residue protein sequence, read N- to C-terminus: Thymidylate kinase (212 aa).

Residue 10–17 coordinates ATP; that stretch reads GLEGAGKT.

It belongs to the thymidylate kinase family.

The catalysed reaction is dTMP + ATP = dTDP + ADP. Functionally, phosphorylation of dTMP to form dTDP in both de novo and salvage pathways of dTTP synthesis. The chain is Thymidylate kinase from Yersinia pestis bv. Antiqua (strain Antiqua).